A 345-amino-acid chain; its full sequence is Trace amine-associated receptor 6 (345 aa).

Topologically, residues 1 to 32 (MSSNSSLLVAVQLCYPNVNGSCVETLYSPGSR) are extracellular. 2 N-linked (GlcNAc...) asparagine glycosylation sites follow: N4 and N19. Cystine bridges form between C22/C186 and C105/C190. The helical transmembrane segment at 33–53 (VILYIVFGFGAVLAVFGNLLV) threads the bilayer. At 54–68 (MISILHFKQLHSPTN) the chain is on the cytoplasmic side. A helical membrane pass occupies residues 69 to 89 (FLVASLACADFLVGVTVMPFS). Residues 90–107 (MVRTVESCWYFGRSFCTF) are Extracellular-facing. A helical transmembrane segment spans residues 108 to 128 (HTCCDVAFCYSSLFHLCFISI). The Cytoplasmic portion of the chain corresponds to 129 to 147 (DRYIAVTDPLVYPTKFTVS). A helical membrane pass occupies residues 148-168 (VSGICISVSWILPLMYSGAVF). The Extracellular segment spans residues 169-202 (YTGVYDDGLEELSDALNCIGGCQTVVNQNWVLID). A helical transmembrane segment spans residues 203–223 (CLSFFIPTFIMIILYGNIFLV). Residues 224–259 (ARRQAKKIENTGSKTESSSESYKARVARRERKAAKT) are Cytoplasmic-facing. The chain crosses the membrane as a helical span at residues 260–276 (LGVTVVAFMISWLPYSI). Topologically, residues 277 to 282 (DSLIDA) are extracellular. Residues 283-302 (FMGFITPAYIYEICCWCAYY) form a helical membrane-spanning segment. At 303 to 345 (NSAMNPLIYALFYPWFRKAIKVIVTGQVLKNSSATMNLFSEHI) the chain is on the cytoplasmic side.

The protein belongs to the G-protein coupled receptor 1 family.

Its subcellular location is the cell membrane. In terms of biological role, olfactory receptor specific for trace amines, such as beta-phenylethylamine (beta-PEA). Trace amine compounds are enriched in animal body fluids and act on trace amine-associated receptors (TAARs) to elicit both intraspecific and interspecific innate behaviors. Beta-PEA-binding causes a conformation change that triggers signaling via G(s)-class of G alpha proteins (GNAL or GNAS). The sequence is that of Trace amine-associated receptor 6 (TAAR6) from Pan troglodytes (Chimpanzee).